The chain runs to 471 residues: Serine/threonine-protein kinase sid1 (471 aa).

The region spanning Y9–I260 is the Protein kinase domain. ATP is bound by residues L15–V23 and K38. D129 serves as the catalytic Proton acceptor.

It belongs to the protein kinase superfamily. STE Ser/Thr protein kinase family. STE20 subfamily. As to quaternary structure, interacts with cdc14.

The protein localises to the cytoplasm. It is found in the cytoskeleton. Its subcellular location is the microtubule organizing center. It localises to the spindle pole body. It catalyses the reaction L-seryl-[protein] + ATP = O-phospho-L-seryl-[protein] + ADP + H(+). The catalysed reaction is L-threonyl-[protein] + ATP = O-phospho-L-threonyl-[protein] + ADP + H(+). In terms of biological role, has a role in the septation initiation network (SIN) required for cytokinesis. The chain is Serine/threonine-protein kinase sid1 (sid1) from Schizosaccharomyces pombe (strain 972 / ATCC 24843) (Fission yeast).